The primary structure comprises 193 residues: NADH-quinone oxidoreductase subunit B (193 aa).

Residues C72, C73, C137, and C167 each contribute to the [4Fe-4S] cluster site.

It belongs to the complex I 20 kDa subunit family. NDH-1 is composed of 14 different subunits. Subunits NuoB, C, D, E, F, and G constitute the peripheral sector of the complex. It depends on [4Fe-4S] cluster as a cofactor.

The protein resides in the cell inner membrane. The catalysed reaction is a quinone + NADH + 5 H(+)(in) = a quinol + NAD(+) + 4 H(+)(out). Functionally, NDH-1 shuttles electrons from NADH, via FMN and iron-sulfur (Fe-S) centers, to quinones in the respiratory chain. The immediate electron acceptor for the enzyme in this species is believed to be ubiquinone. Couples the redox reaction to proton translocation (for every two electrons transferred, four hydrogen ions are translocated across the cytoplasmic membrane), and thus conserves the redox energy in a proton gradient. The protein is NADH-quinone oxidoreductase subunit B of Bartonella quintana (strain Toulouse) (Rochalimaea quintana).